Consider the following 771-residue polypeptide: Ribonucleoside-diphosphate reductase large subunit (771 aa).

Positions 1 to 92 constitute an ATP-cone domain; that stretch reads MFVIKRNGYK…VSNLHKETKK (92 aa). Residues 5–6, 11–17, Thr53, Asp57, and Lys88 contribute to the ATP site; these read KR and ENVMFDK. Ser202 and Ser217 together coordinate GDP. DTTP-binding positions include 226–228, Lys243, and Arg256; that span reads DSI. Asn427 is a GDP binding site. The active-site Proton acceptor is the Asn427. Catalysis depends on Cys429, which acts as the Cysteine radical intermediate. Residues Glu431 and 603-606 each bind GDP; that span reads TAST. The active-site Proton acceptor is Glu431.

Belongs to the ribonucleoside diphosphate reductase large chain family. As to quaternary structure, interacts with RNR2/OPG047 subunit. Mg(2+) serves as cofactor.

The catalysed reaction is a 2'-deoxyribonucleoside 5'-diphosphate + [thioredoxin]-disulfide + H2O = a ribonucleoside 5'-diphosphate + [thioredoxin]-dithiol. Its function is as follows. Ribonucleoside-diphosphate reductase holoenzyme provides the precursors necessary for viral DNA synthesis. Allows virus growth in non-dividing cells. Catalyzes the biosynthesis of deoxyribonucleotides from the corresponding ribonucleotides. In Homo sapiens (Human), this protein is Ribonucleoside-diphosphate reductase large subunit (OPG080).